A 475-amino-acid chain; its full sequence is Putative response regulator NtrX-like (475 aa).

The region spanning 5-121 is the Response regulatory domain; that stretch reads DVLILDDEES…KLIILLKRAC (117 aa). Aspartate 54 is modified (4-aspartylphosphate). One can recognise a Sigma-54 factor interaction domain in the interval 143–369; the sequence is LVGGCSVTLK…LRNVVEWTLI (227 aa). Residues 171–178 and 232–241 contribute to the ATP site; these read GKVGSGKE and ANNGTLYIDE.

In terms of biological role, member of the two-component regulatory system RT0550/RT0603. This is Putative response regulator NtrX-like from Rickettsia typhi (strain ATCC VR-144 / Wilmington).